The chain runs to 305 residues: tRNA dimethylallyltransferase (305 aa).

Gly9 to Ser16 is an ATP binding site. Thr11–Ser16 contributes to the substrate binding site. The tract at residues Asp34 to Gln37 is interaction with substrate tRNA.

Belongs to the IPP transferase family. As to quaternary structure, monomer. Requires Mg(2+) as cofactor.

The enzyme catalyses adenosine(37) in tRNA + dimethylallyl diphosphate = N(6)-dimethylallyladenosine(37) in tRNA + diphosphate. Its function is as follows. Catalyzes the transfer of a dimethylallyl group onto the adenine at position 37 in tRNAs that read codons beginning with uridine, leading to the formation of N6-(dimethylallyl)adenosine (i(6)A). This Anaplasma marginale (strain Florida) protein is tRNA dimethylallyltransferase.